A 30-amino-acid polypeptide reads, in one-letter code: Varv peptide G (30 aa).

Residues 1–30 constitute a cross-link (cyclopeptide (Gly-Asn)); it reads GVPVCGETCFGGTCNTPGCSCDPWPVCSRN. Disulfide bonds link Cys5-Cys19, Cys9-Cys21, and Cys14-Cys27.

This is a cyclic peptide.

Functionally, probably participates in a plant defense mechanism. The protein is Varv peptide G of Viola arvensis (European field pansy).